We begin with the raw amino-acid sequence, 59 residues long: Cortexin domain containing 2 (59 aa).

The helical transmembrane segment at 20-40 threads the bilayer; it reads FAIAFVVLVFVFLIVMVFRCV.

It localises to the membrane. This Mus musculus (Mouse) protein is Cortexin domain containing 2.